The sequence spans 466 residues: Cytochrome P450 85A1 (466 aa).

The chain crosses the membrane as a helical span at residues 1–21 (MVLAVLIGVLVGIVLVSSLLL). Cysteine 416 is a heme binding site.

It belongs to the cytochrome P450 family. The cofactor is heme.

The protein localises to the membrane. It carries out the reaction 6-deoxoteasterone + reduced [NADPH--hemoprotein reductase] + O2 = 6alpha-hydroxyteasterone + oxidized [NADPH--hemoprotein reductase] + H2O + H(+). The enzyme catalyses 6alpha-hydroxytyphasterol + reduced [NADPH--hemoprotein reductase] + O2 = teasterone + oxidized [NADPH--hemoprotein reductase] + 2 H2O + H(+). The catalysed reaction is 3-dehydro-6-deoxoteasterone + reduced [NADPH--hemoprotein reductase] + O2 = 3-dehydro-6alpha-hydroxyteasterone + oxidized [NADPH--hemoprotein reductase] + H2O + H(+). It catalyses the reaction 3-dehydro-6alpha-hydroxyteasterone + reduced [NADPH--hemoprotein reductase] + O2 = 3-dehydroteasterone + oxidized [NADPH--hemoprotein reductase] + 2 H2O + H(+). It carries out the reaction 6-deoxotyphasterol + reduced [NADPH--hemoprotein reductase] + O2 = 6alpha-hydroxytyphasterol + oxidized [NADPH--hemoprotein reductase] + H2O + H(+). The enzyme catalyses 6alpha-hydroxytyphasterol + reduced [NADPH--hemoprotein reductase] + O2 = typhasterol + oxidized [NADPH--hemoprotein reductase] + 2 H2O + H(+). The catalysed reaction is 6-deoxocastasterone + reduced [NADPH--hemoprotein reductase] + O2 = 6alpha-hydroxycastasterone + oxidized [NADPH--hemoprotein reductase] + H2O + H(+). It catalyses the reaction 6alpha-hydroxycastasterone + reduced [NADPH--hemoprotein reductase] + O2 = castasterone + oxidized [NADPH--hemoprotein reductase] + 2 H2O + H(+). It carries out the reaction 3-dehydro-6-deoxoteasterone + 2 reduced [NADPH--hemoprotein reductase] + 2 O2 = 3-dehydroteasterone + 2 oxidized [NADPH--hemoprotein reductase] + 3 H2O + 2 H(+). The enzyme catalyses 6-deoxocastasterone + 2 reduced [NADPH--hemoprotein reductase] + 2 O2 = castasterone + 2 oxidized [NADPH--hemoprotein reductase] + 3 H2O + 2 H(+). The catalysed reaction is 6-deoxoteasterone + 2 reduced [NADPH--hemoprotein reductase] + 2 O2 = teasterone + 2 oxidized [NADPH--hemoprotein reductase] + 3 H2O + 2 H(+). It catalyses the reaction 6-deoxotyphasterol + 2 reduced [NADPH--hemoprotein reductase] + 2 O2 = typhasterol + 2 oxidized [NADPH--hemoprotein reductase] + 3 H2O + 2 H(+). Its pathway is plant hormone biosynthesis; brassinosteroid biosynthesis. In terms of biological role, involved in reduction steps of the biosynthesis of plant campesterol-derivative steroids, ending to castasterone (CS) but missing brassinolide (BL). Catalyzes the C6-oxidation step in brassinosteroids biosynthesis; the conversion of 6-deoxoteasterone (6-deoxoTE) to teasterone (TE), 3-dehydro-6-deoxoteasterone (6-deoxo3DT, 6-deoxo-3-DHT) to 3-dehydroteasterone (3DT, 3-DHT), 6-deoxotyphasterol (6-deoxoTY) to typhasterol (TY) and of 6-deoxocastasterone (6-deoxoCS) to castasterone (CS). This chain is Cytochrome P450 85A1, found in Brachypodium distachyon (Purple false brome).